Consider the following 1059-residue polypeptide: Cellulose synthase catalytic subunit A [UDP-forming] (1059 aa).

Disordered regions lie at residues 1–159 and 174–220; these read MDRN…RFDT and MRQH…KHVA. Residues 15-36 are compositionally biased toward low complexity; it reads NNINSSGGSYNNSMNNSSNNIG. 2 stretches are compositionally biased toward polar residues: residues 40 to 57 and 142 to 154; these read GNNQ…QSNL and NSPS…TSGG. A compositionally biased stretch (low complexity) spans 181 to 194; sequence QEQQQQQQQQQQQQ. Basic residues predominate over residues 204 to 219; it reads QKKKPSSMQLSKKKHV. 3 helical membrane passes run 246–266, 280–300, and 306–323; these read FSHA…IFYF, ITFS…LGSA, and FTNP…QILA. Residues 328-628 form a catalytic subdomain A region; that stretch reads KHPTVMMYVC…FLGLLDADQQ (301 aa). Asp-370 is a catalytic residue. Substrate contacts are provided by Asp-624 and Asp-626. The segment at 701-761 is catalytic subdomain B; sequence QPLYDIGGIM…EQRKRWAQGA (61 aa). Asp-717 is an active-site residue. The next 2 helical transmembrane spans lie at 790–810 and 813–833; these read IYPF…IMSI and VPIV…PVMV. The disordered stretch occupies residues 933–953; that stretch reads DNAQESSGKHKAEQSFRTSNK. Over residues 939–953 the composition is skewed to basic and acidic residues; sequence SGKHKAEQSFRTSNK. 3 consecutive transmembrane segments (helical) span residues 963-983, 993-1013, and 1035-1055; these read LFLP…SAVL, WLLV…WSFI, and IVLF…KVCI.

The protein belongs to the glycosyltransferase 2 family. The cofactor is Mg(2+).

It is found in the membrane. It carries out the reaction [(1-&gt;4)-beta-D-glucosyl](n) + UDP-alpha-D-glucose = [(1-&gt;4)-beta-D-glucosyl](n+1) + UDP + H(+). Its pathway is glycan metabolism; amoeba cellulose biosynthesis. Catalytic subunit of cellulose synthase. It incorporates glucose from uridine 5'-diphosphate glucose (UDP-alpha-D-glucose) to cellulose (a (1-&gt;4)-beta-D-glucan), which is produced as an extracellular component for mechanical and chemical protection at the onset of the stalk formation, when the cells exhibit multicellular behavior during culmination. This Dictyostelium discoideum (Social amoeba) protein is Cellulose synthase catalytic subunit A [UDP-forming] (dcsA).